The primary structure comprises 445 residues: C4-dicarboxylate transport protein (445 aa).

8 helical membrane passes run 24–44, 62–82, 105–125, 163–183, 201–221, 234–254, 322–342, and 370–390; these read VLYVQVLFAIVVGVLVGWLSP, LIKMVIAPIIFCTVVSGIAHI, FALVLGLIVGNLFPVGHGLAA, GDILQVLLFAVLFGFALMALG, FGVIAIVMKAAPIGAFGAMAF, LIGLVALFYATSALFVVLVLG, IYMTLATLFIAQALGIELSFG, and AGTLAAVNPALVPGMAIVFSI.

It belongs to the dicarboxylate/amino acid:cation symporter (DAACS) (TC 2.A.23) family.

It is found in the cell inner membrane. Functionally, responsible for the transport of dicarboxylates such as succinate, fumarate, and malate from the periplasm across the membrane. This chain is C4-dicarboxylate transport protein, found in Rhodopseudomonas palustris (strain ATCC BAA-98 / CGA009).